A 193-amino-acid chain; its full sequence is Imidazoleglycerol-phosphate dehydratase (193 aa).

The protein belongs to the imidazoleglycerol-phosphate dehydratase family.

The protein resides in the cytoplasm. It catalyses the reaction D-erythro-1-(imidazol-4-yl)glycerol 3-phosphate = 3-(imidazol-4-yl)-2-oxopropyl phosphate + H2O. It functions in the pathway amino-acid biosynthesis; L-histidine biosynthesis; L-histidine from 5-phospho-alpha-D-ribose 1-diphosphate: step 6/9. In Saccharolobus islandicus (strain Y.G.57.14 / Yellowstone #1) (Sulfolobus islandicus), this protein is Imidazoleglycerol-phosphate dehydratase.